A 465-amino-acid chain; its full sequence is Endo-1,3-1,4-beta-glycanase ExsH (465 aa).

Hemolysin-type calcium-binding repeat units lie at residues His33–Thr50, Phe105–Ile122, and Asp123–Phe140. The GH16 domain maps to Ala206 to Asp462. The active-site Nucleophile is the Glu349. Glu354 (proton donor) is an active-site residue.

Belongs to the glycosyl hydrolase 16 family.

The protein localises to the secreted. It functions in the pathway glycan metabolism; exopolysaccharide biosynthesis. Functionally, cleaves high molecular weight succinoglycan to yield LMW succinoglycan. Dynamically regulates the molecular weight distribution of succinoglycan by cleaving nascent succinoglycan only during a limited period after its synthesis, perhaps before it undergoes a time-dependent change in its conformation or aggregation state. In Rhizobium meliloti (strain 1021) (Ensifer meliloti), this protein is Endo-1,3-1,4-beta-glycanase ExsH (exsH).